Reading from the N-terminus, the 72-residue chain is Translation initiation factor IF-1 (72 aa).

One can recognise an S1-like domain in the interval 1–72 (MAKEDSIEMQ…SKGRIVFRSR (72 aa)).

This sequence belongs to the IF-1 family. In terms of assembly, component of the 30S ribosomal translation pre-initiation complex which assembles on the 30S ribosome in the order IF-2 and IF-3, IF-1 and N-formylmethionyl-tRNA(fMet); mRNA recruitment can occur at any time during PIC assembly.

Its subcellular location is the cytoplasm. Its function is as follows. One of the essential components for the initiation of protein synthesis. Stabilizes the binding of IF-2 and IF-3 on the 30S subunit to which N-formylmethionyl-tRNA(fMet) subsequently binds. Helps modulate mRNA selection, yielding the 30S pre-initiation complex (PIC). Upon addition of the 50S ribosomal subunit IF-1, IF-2 and IF-3 are released leaving the mature 70S translation initiation complex. This is Translation initiation factor IF-1 from Aeromonas hydrophila subsp. hydrophila (strain ATCC 7966 / DSM 30187 / BCRC 13018 / CCUG 14551 / JCM 1027 / KCTC 2358 / NCIMB 9240 / NCTC 8049).